A 244-amino-acid chain; its full sequence is MSVEITFVEQFQEILQNGKEQIILLNFYAPWAAPCKQMNQVFDQFAKDTKNAVFLKIEAEKFSDIAESFDVNAVPLFVLIHGAKVLARISGANPQKLKAAIDEYIQPLISQISSTNASVETQVNSVQTTNTTSNTSKAPNGLDSELNERLSTLTNAHNVMLFLKGTPSEPACGFSRKLVGLLREQNVQYGFFNILADDSVRQGLKVFSDWPTFPQLYIKGEFVGGLDIVSEMIENGELQEMLPN.

The region spanning 2-106 (SVEITFVEQF…LKAAIDEYIQ (105 aa)) is the Thioredoxin domain. The region spanning 147-244 (NERLSTLTNA…NGELQEMLPN (98 aa)) is the Glutaredoxin domain. Lys164 provides a ligand contact to glutathione. Cys172 serves as a coordination point for [2Fe-2S] cluster. Residues 201-205 (RQGLK) and 226-227 (LD) contribute to the glutathione site.

Belongs to the glutaredoxin family. Monothiol subfamily. As to quaternary structure, homodimer. Interacts with php4.

The protein localises to the cytoplasm. It localises to the nucleus. Functionally, monothiol glutaredoxin involved in the biogenesis of iron-sulfur clusters. Binds one iron-sulfur cluster per dimer. The iron-sulfur cluster is bound between subunits, and is complexed by a bound glutathione and a cysteine residue from each subunit. The polypeptide is Monothiol glutaredoxin-4 (grx4) (Schizosaccharomyces pombe (strain 972 / ATCC 24843) (Fission yeast)).